A 468-amino-acid chain; its full sequence is MFSITTLRDWTPDPGSIICWHASPTAKAKARQAPISEVPPSYQQAQHLRRYRDHVARGLDMSRLMIFTWDLPGRCNIRAMNYAINAHLRRHDTYHSWFEFDNAEHIVRHTIADPADIEVVQAEHQNMTSAELRHHIATPQPLQWDCFLFGIIQSDDHFTFYASIAHLCVDPMIVGVLFIEIHMMYSALVGGDPPIELPPAGRYDDHCVRQYADTAALTLDSARVRRWVEFAANNDGTLPHFPLPLGDLSVPHTGKLLTETLMDEQQGERFEAACVAAGARFSGGVFACAALAERELTNCETFDVVTTTDTRRTPTELRTTGWFTGLVPITVPVASGLFDSAARVAQISFDSGKDLATVPFDRVLELARPETGLRPPRPGNFVMSFLDASIAPLSTVANSDLNFRIYDEGRVSHQVSMWVNRYQHQTTVTVLFPDNPIASESVANYIAAMKSIYIRTADGTLATLKPGT.

The protein belongs to the PapA acyltransferase family.

The catalysed reaction is 2-O-sulfo-alpha,alpha-trehalose + hexadecanoyl-CoA = 2-O-sulfo-2'-O-hexadecanoyl-alpha,alpha-trehalose + CoA. In terms of biological role, catalyzes the acylation of trehalose-2-sulfate by adding the palmitoyl group at the 2'-position to yield the intermediate trehalose-2-sulfate-2'-palmitate (SL659). This chain is Trehalose-2-sulfate acyltransferase PapA2 (papA2), found in Mycobacterium tuberculosis (strain ATCC 25177 / H37Ra).